The primary structure comprises 128 residues: MTEPEVNPKAYPLADAQLTKTLLDLVQQSANYKQLRKGANEATKTLNRGIAEFIVMAADAEPLEIILHLPLLCEDKNVPYVFVRSKQALGRACGVSRPVIACSVTIKEGSQLKPQIQSVQQAIERLLV.

Residues 36 to 48 (RKGANEATKTLNR) are interaction with U4 snRNA and U4atac snRNA. Residues 96 to 128 (SRPVIACSVTIKEGSQLKPQIQSVQQAIERLLV) are important for U4 snRNA-binding.

The protein belongs to the eukaryotic ribosomal protein eL8 family. As to quaternary structure, identified in the spliceosome B complex. Component of the U4/U6-U5 tri-snRNP complex. Part of the small subunit (SSU) processome, composed of more than 70 proteins and the RNA chaperone small nucleolar RNA (snoRNA) U3.

The protein resides in the nucleus. The protein localises to the nucleolus. Part of the small subunit (SSU) processome, first precursor of the small eukaryotic ribosomal subunit. During the assembly of the SSU processome in the nucleolus, many ribosome biogenesis factors, an RNA chaperone and ribosomal proteins associate with the nascent pre-rRNA and work in concert to generate RNA folding, modifications, rearrangements and cleavage as well as targeted degradation of pre-ribosomal RNA by the RNA exosome. Involved in pre-mRNA splicing as component of the spliceosome. Binds to the 5'-stem-loop of U4 snRNA and thereby contributes to spliceosome assembly. The protein undergoes a conformational change upon RNA-binding. Core component of box C/D small nucleolar ribonucleoprotein (snoRNP) complexes that function in methylation of multiple sites on ribosomal RNAs (rRNAs) and messenger RNAs (mRNAs). This chain is NHP2-like protein 1, found in Xenopus laevis (African clawed frog).